The following is a 278-amino-acid chain: HTH-type transcriptional activator RhaS (278 aa).

The region spanning 174 to 272 (NLLLAWLEDH…NWSPRDIRQG (99 aa)) is the HTH araC/xylS-type domain. 2 consecutive DNA-binding regions (H-T-H motif) follow at residues 191 to 212 (DAVAEQFSLSLRTLHRQLKQQT) and 239 to 262 (VTDIAYRCGFSDSNHFSTLFRREF).

Binds DNA as a dimer.

Its subcellular location is the cytoplasm. Functionally, activates expression of the rhaBAD and rhaT operons. The sequence is that of HTH-type transcriptional activator RhaS from Escherichia coli O139:H28 (strain E24377A / ETEC).